The chain runs to 338 residues: UDP-glucose 4-epimerase (338 aa).

NAD(+) is bound by residues 11 to 12 (YI), 31 to 36 (DNLCNS), 58 to 59 (DI), 80 to 84 (FAGLK), Asn-99, Ser-124, Tyr-149, Lys-153, and Phe-178. Positions 124 and 149 each coordinate substrate. Tyr-149 (proton acceptor) is an active-site residue. Residues Asn-179, 199–200 (NL), 216–218 (AVF), Arg-231, 292–295 (RDGD), and Tyr-299 each bind substrate.

Belongs to the NAD(P)-dependent epimerase/dehydratase family. As to quaternary structure, homodimer. It depends on NAD(+) as a cofactor.

It catalyses the reaction UDP-alpha-D-glucose = UDP-alpha-D-galactose. Its pathway is carbohydrate metabolism; galactose metabolism. Functionally, involved in the metabolism of galactose. Catalyzes the conversion of UDP-galactose (UDP-Gal) to UDP-glucose (UDP-Glc) through a mechanism involving the transient reduction of NAD. The sequence is that of UDP-glucose 4-epimerase (galE) from Salmonella typhi.